A 540-amino-acid polypeptide reads, in one-letter code: Chaperonin GroEL (540 aa).

ATP-binding positions include 29 to 32 (TLGP), 86 to 90 (DGTTT), glycine 413, 476 to 478 (NAA), and aspartate 492.

Belongs to the chaperonin (HSP60) family. In terms of assembly, forms a cylinder of 14 subunits composed of two heptameric rings stacked back-to-back. Interacts with the co-chaperonin GroES.

The protein localises to the cytoplasm. The catalysed reaction is ATP + H2O + a folded polypeptide = ADP + phosphate + an unfolded polypeptide.. Its function is as follows. Together with its co-chaperonin GroES, plays an essential role in assisting protein folding. The GroEL-GroES system forms a nano-cage that allows encapsulation of the non-native substrate proteins and provides a physical environment optimized to promote and accelerate protein folding. The chain is Chaperonin GroEL from Geobacillus thermodenitrificans (strain NG80-2).